The following is a 309-amino-acid chain: UDP-N-acetylenolpyruvoylglucosamine reductase (309 aa).

The FAD-binding PCMH-type domain maps to 34–221 (RVGGPAQVLF…TAAREAAQPI (188 aa)). The active site involves Arg179. The active-site Proton donor is the Ser228. Glu298 is a catalytic residue.

Belongs to the MurB family. It depends on FAD as a cofactor.

The protein resides in the cytoplasm. The catalysed reaction is UDP-N-acetyl-alpha-D-muramate + NADP(+) = UDP-N-acetyl-3-O-(1-carboxyvinyl)-alpha-D-glucosamine + NADPH + H(+). The protein operates within cell wall biogenesis; peptidoglycan biosynthesis. In terms of biological role, cell wall formation. In Methylorubrum extorquens (strain CM4 / NCIMB 13688) (Methylobacterium extorquens), this protein is UDP-N-acetylenolpyruvoylglucosamine reductase.